The following is a 490-amino-acid chain: Betaine aldehyde dehydrogenase (490 aa).

Residues Ile-27 and Asp-93 each contribute to the K(+) site. Residue 150–152 (GAW) participates in NAD(+) binding. The active-site Charge relay system is Lys-162. Residue 176–179 (KPSE) coordinates NAD(+). Val-180 contacts K(+). 230–233 (GTTT) provides a ligand contact to NAD(+). Leu-246 is a binding site for K(+). Glu-252 serves as the catalytic Proton acceptor. NAD(+) is bound by residues Gly-254, Cys-286, and Glu-387. Cys-286 (nucleophile) is an active-site residue. Position 286 is a cysteine sulfenic acid (-SOH) (Cys-286). K(+)-binding residues include Lys-457 and Gly-460. Glu-464 (charge relay system) is an active-site residue.

The protein belongs to the aldehyde dehydrogenase family. Dimer of dimers. K(+) serves as cofactor.

The catalysed reaction is betaine aldehyde + NAD(+) + H2O = glycine betaine + NADH + 2 H(+). It participates in amine and polyamine biosynthesis; betaine biosynthesis via choline pathway; betaine from betaine aldehyde: step 1/1. Its function is as follows. Involved in the biosynthesis of the osmoprotectant glycine betaine. Catalyzes the irreversible oxidation of betaine aldehyde to the corresponding acid. This is Betaine aldehyde dehydrogenase from Pseudomonas putida (strain ATCC 700007 / DSM 6899 / JCM 31910 / BCRC 17059 / LMG 24140 / F1).